The chain runs to 480 residues: Cytochrome b-c1 complex subunit 1, mitochondrial (480 aa).

The N-terminal 34 residues, 1-34 (MAASVVCRAATAGAQVLLRARRSPALLRTPALRS), are a transit peptide targeting the mitochondrion. N6-acetyllysine is present on residues lysine 111 and lysine 138. Lysine 163 is modified (N6-acetyllysine; alternate). At lysine 163 the chain carries N6-succinyllysine; alternate. Serine 212 bears the Phosphoserine mark. Lysine 248 bears the N6-acetyllysine mark.

This sequence belongs to the peptidase M16 family. UQCRC1/QCR1 subfamily. In terms of assembly, component of the ubiquinol-cytochrome c oxidoreductase (cytochrome b-c1 complex, complex III, CIII), a multisubunit enzyme composed of 11 subunits. The complex is composed of 3 respiratory subunits cytochrome b, cytochrome c1 and Rieske protein UQCRFS1, 2 core protein subunits UQCRC1/QCR1 and UQCRC2/QCR2, and 6 low-molecular weight protein subunits UQCRH/QCR6, UQCRB/QCR7, UQCRQ/QCR8, UQCR10/QCR9, UQCR11/QCR10 and subunit 9, the cleavage product of Rieske protein UQCRFS1. The complex exists as an obligatory dimer and forms supercomplexes (SCs) in the inner mitochondrial membrane with NADH-ubiquinone oxidoreductase (complex I, CI) and cytochrome c oxidase (complex IV, CIV), resulting in different assemblies (supercomplex SCI(1)III(2)IV(1) and megacomplex MCI(2)III(2)IV(2)). Interacts with UQCC6. Interacts with STMP1. In terms of tissue distribution, expressed in brain, including substantia nigra, striatum, cortex and cerebellum, and in spinal cord, heart, kidney, liver and muscle.

The protein resides in the mitochondrion inner membrane. Component of the ubiquinol-cytochrome c oxidoreductase, a multisubunit transmembrane complex that is part of the mitochondrial electron transport chain which drives oxidative phosphorylation. The respiratory chain contains 3 multisubunit complexes succinate dehydrogenase (complex II, CII), ubiquinol-cytochrome c oxidoreductase (cytochrome b-c1 complex, complex III, CIII) and cytochrome c oxidase (complex IV, CIV), that cooperate to transfer electrons derived from NADH and succinate to molecular oxygen, creating an electrochemical gradient over the inner membrane that drives transmembrane transport and the ATP synthase. The cytochrome b-c1 complex catalyzes electron transfer from ubiquinol to cytochrome c, linking this redox reaction to translocation of protons across the mitochondrial inner membrane, with protons being carried across the membrane as hydrogens on the quinol. In the process called Q cycle, 2 protons are consumed from the matrix, 4 protons are released into the intermembrane space and 2 electrons are passed to cytochrome c. The 2 core subunits UQCRC1/QCR1 and UQCRC2/QCR2 are homologous to the 2 mitochondrial-processing peptidase (MPP) subunits beta-MPP and alpha-MPP respectively, and they seem to have preserved their MPP processing properties. May be involved in the in situ processing of UQCRFS1 into the mature Rieske protein and its mitochondrial targeting sequence (MTS)/subunit 9 when incorporated into complex III. Seems to play an important role in the maintenance of proper mitochondrial function in nigral dopaminergic neurons. The protein is Cytochrome b-c1 complex subunit 1, mitochondrial (UQCRC1) of Homo sapiens (Human).